A 375-amino-acid polypeptide reads, in one-letter code: Succinyl-diaminopimelate desuccinylase (375 aa).

A Zn(2+)-binding site is contributed by His-66. Asp-68 is an active-site residue. Residue Asp-99 coordinates Zn(2+). Glu-133 functions as the Proton acceptor in the catalytic mechanism. Residues Glu-134, Glu-162, and His-348 each coordinate Zn(2+).

This sequence belongs to the peptidase M20A family. DapE subfamily. Homodimer. Zn(2+) serves as cofactor. Requires Co(2+) as cofactor.

The enzyme catalyses N-succinyl-(2S,6S)-2,6-diaminopimelate + H2O = (2S,6S)-2,6-diaminopimelate + succinate. The protein operates within amino-acid biosynthesis; L-lysine biosynthesis via DAP pathway; LL-2,6-diaminopimelate from (S)-tetrahydrodipicolinate (succinylase route): step 3/3. Its function is as follows. Catalyzes the hydrolysis of N-succinyl-L,L-diaminopimelic acid (SDAP), forming succinate and LL-2,6-diaminopimelate (DAP), an intermediate involved in the bacterial biosynthesis of lysine and meso-diaminopimelic acid, an essential component of bacterial cell walls. The polypeptide is Succinyl-diaminopimelate desuccinylase (Cronobacter sakazakii (strain ATCC BAA-894) (Enterobacter sakazakii)).